The primary structure comprises 1867 residues: TATA-binding protein-associated factor MOT1 (1867 aa).

Residue serine 93 is modified to Phosphoserine. Positions 169–228 (KTDDIKQETSMLNASDKANENKSNANKKSARMLAMARRKKKMSAKNTPKHPVDITESSVS) are disordered. Residues 181–203 (NASDKANENKSNANKKSARMLAM) are compositionally biased toward low complexity. Residues 195–211 (KKSARMLAMARRKKKMS) carry the Nuclear localization signal motif. 3 HEAT repeats span residues 289–326 (WQFQGIYELLLDNLMSENWEIRHGAALGLRELVKKHAY), 445–482 (GLLENVVRIVLYGLNQSDDDVQSVAASILTPITSEFVK), and 541–578 (WSFKSLVPKLYPFLRHSISSVRRAVLNLLIAFLSIKDD). Serine 677 carries the post-translational modification Phosphoserine. HEAT repeat units follow at residues 1108 to 1145 (SEVFTRFPVLLTFLRSNLSVFRYSAARTFADLAKISSV) and 1188 to 1225 (PYVIFLIVPLLGRMSDSNEDVRNLATTTFASIIKLVPL). The region spanning 1284-1457 (AFLNKYHLHG…WSLFDFLMPG (174 aa)) is the Helicase ATP-binding domain. 1297–1304 (DDMGLGKT) lines the ATP pocket. The DEGH box signature appears at 1408–1411 (DEGH). The HEAT 6 repeat unit spans residues 1495-1537 (ALHKQVLPFMLRRLKEDVLSDLPPKIIQDYYCELGDLQKQLYM). A Helicase C-terminal domain is found at 1639–1787 (PIQNVISQHR…STVVNQQNSG (149 aa)). Residues 1802 to 1822 (PDNVTSQDNEEKNNGDSQAAK) form a disordered region.

This sequence belongs to the SNF2/RAD54 helicase family. As to quaternary structure, forms a complex with TBP which binds TATA DNA with high affinity but with altered specificity.

It is found in the mitochondrion. The protein resides in the nucleus. Regulates transcription in association with TATA binding protein (TBP). Removes TBP from the TATA box via its C-terminal ATPase activity. Both transcription activation and repression require its ATPase activity. In Saccharomyces cerevisiae (strain ATCC 204508 / S288c) (Baker's yeast), this protein is TATA-binding protein-associated factor MOT1 (MOT1).